We begin with the raw amino-acid sequence, 319 residues long: Methionyl-tRNA formyltransferase (319 aa).

Serine 116–proline 119 is a (6S)-5,6,7,8-tetrahydrofolate binding site.

It belongs to the Fmt family.

The catalysed reaction is L-methionyl-tRNA(fMet) + (6R)-10-formyltetrahydrofolate = N-formyl-L-methionyl-tRNA(fMet) + (6S)-5,6,7,8-tetrahydrofolate + H(+). In terms of biological role, attaches a formyl group to the free amino group of methionyl-tRNA(fMet). The formyl group appears to play a dual role in the initiator identity of N-formylmethionyl-tRNA by promoting its recognition by IF2 and preventing the misappropriation of this tRNA by the elongation apparatus. The protein is Methionyl-tRNA formyltransferase of Chlorobium phaeovibrioides (strain DSM 265 / 1930) (Prosthecochloris vibrioformis (strain DSM 265)).